A 746-amino-acid polypeptide reads, in one-letter code: Protein zyg-11 homolog (746 aa).

LRR repeat units lie at residues 185-209 (LPRL…GLRS), 216-241 (MHQL…VLQH), and 265-289 (LPQL…AFVE).

The protein belongs to the zyg-11 family.

Its function is as follows. Serves as substrate adapter subunit in an E3 ubiquitin ligase complex zyg11-cul2-elongin BC. Targets substrates bearing N-terminal glycine degrons for proteasomal degradation. The sequence is that of Protein zyg-11 homolog (zyg11) from Danio rerio (Zebrafish).